The following is a 96-amino-acid chain: Protein RnfH (96 aa).

Belongs to the UPF0125 (RnfH) family.

In Cronobacter sakazakii (strain ATCC BAA-894) (Enterobacter sakazakii), this protein is Protein RnfH.